We begin with the raw amino-acid sequence, 469 residues long: Glutamate--tRNA ligase (469 aa).

The 'HIGH' region signature appears at 8-18 (PSPTGFLHVGG). Positions 97, 99, 124, and 126 each coordinate Zn(2+). A 'KMSKS' region motif is present at residues 236-240 (KLSKR). Lys-239 contributes to the ATP binding site.

The protein belongs to the class-I aminoacyl-tRNA synthetase family. Glutamate--tRNA ligase type 1 subfamily. As to quaternary structure, monomer. Zn(2+) is required as a cofactor.

It is found in the cytoplasm. The catalysed reaction is tRNA(Glu) + L-glutamate + ATP = L-glutamyl-tRNA(Glu) + AMP + diphosphate. Functionally, catalyzes the attachment of glutamate to tRNA(Glu) in a two-step reaction: glutamate is first activated by ATP to form Glu-AMP and then transferred to the acceptor end of tRNA(Glu). The protein is Glutamate--tRNA ligase of Francisella philomiragia subsp. philomiragia (strain ATCC 25017 / CCUG 19701 / FSC 153 / O#319-036).